A 308-amino-acid chain; its full sequence is uncharacterized protein (308 aa).

10 helical membrane-spanning segments follow: residues 45–65, 69–89, 100–120, 122–142, 151–171, 172–192, 201–221, 226–246, 263–283, and 285–305; these read LGLALVALIWGSTFPVVKIAL, SPFAFNTVRFFIACLFFLPFL, IGIASFLGYTFQTVGLDYTTA, NAGFITSTYVVLAPIISWLVY, VSGVLLAFVGFYFLSGYSGFN, IGDILMLFCALFFGAEIAMIS, TMLAFWQSFAIFILSAPFAVF, FEINTTVILCLLITAFFATFV, AAVILSLEGVFAHLFSVAVLA, and ILTPVQYFGAFLILLAVIIVS. EamA domains are found at residues 52-166 and 178-306; these read LIWG…FLSG and LFCA…IVSL.

The protein belongs to the EamA transporter family.

It is found in the cell membrane. This is an uncharacterized protein from Archaeoglobus fulgidus (strain ATCC 49558 / DSM 4304 / JCM 9628 / NBRC 100126 / VC-16).